Consider the following 444-residue polypeptide: Adenylosuccinate synthetase (444 aa).

Residues glycine 19–lysine 25 and glycine 47–threonine 49 contribute to the GTP site. Aspartate 20 serves as the catalytic Proton acceptor. Mg(2+) contacts are provided by aspartate 20 and glycine 47. IMP contacts are provided by residues aspartate 20 to lysine 23, asparagine 45 to histidine 48, threonine 139, arginine 153, glutamine 234, threonine 249, and arginine 317. The active-site Proton donor is histidine 48. A substrate-binding site is contributed by threonine 313 to arginine 319. Residues arginine 319, lysine 345–aspartate 347, and serine 427–glycine 429 contribute to the GTP site.

It belongs to the adenylosuccinate synthetase family. As to quaternary structure, homodimer. The cofactor is Mg(2+).

The protein localises to the cytoplasm. The enzyme catalyses IMP + L-aspartate + GTP = N(6)-(1,2-dicarboxyethyl)-AMP + GDP + phosphate + 2 H(+). It participates in purine metabolism; AMP biosynthesis via de novo pathway; AMP from IMP: step 1/2. Plays an important role in the de novo pathway of purine nucleotide biosynthesis. Catalyzes the first committed step in the biosynthesis of AMP from IMP. In Methylibium petroleiphilum (strain ATCC BAA-1232 / LMG 22953 / PM1), this protein is Adenylosuccinate synthetase.